Reading from the N-terminus, the 540-residue chain is Glucose-6-phosphate isomerase (540 aa).

Glu-346 serves as the catalytic Proton donor. Active-site residues include His-377 and Lys-505.

It belongs to the GPI family.

The protein resides in the cytoplasm. The enzyme catalyses alpha-D-glucose 6-phosphate = beta-D-fructose 6-phosphate. It participates in carbohydrate biosynthesis; gluconeogenesis. It functions in the pathway carbohydrate degradation; glycolysis; D-glyceraldehyde 3-phosphate and glycerone phosphate from D-glucose: step 2/4. Catalyzes the reversible isomerization of glucose-6-phosphate to fructose-6-phosphate. The protein is Glucose-6-phosphate isomerase of Francisella tularensis subsp. tularensis (strain SCHU S4 / Schu 4).